A 21-amino-acid chain; its full sequence is DGPAQKQNTVNQLLVLIYLYK.

It belongs to the tyrosinase family. Hemocyanin subfamily. As to expression, hemolymph.

It localises to the secreted. The protein resides in the extracellular space. Its function is as follows. Hemocyanins are copper-containing oxygen carriers occurring freely dissolved in the hemolymph of many mollusks and arthropods. The protein is Hemocyanin subunit 4 of Maja squinado (Mediterranean spider crab).